The following is a 942-amino-acid chain: Exopolysaccharide phosphotransferase SCO2592 (942 aa).

The protein belongs to the stealth family.

This chain is Exopolysaccharide phosphotransferase SCO2592, found in Streptomyces coelicolor (strain ATCC BAA-471 / A3(2) / M145).